The sequence spans 172 residues: Small ribosomal subunit protein uS5 (172 aa).

Positions 17–80 (LKEKMIAVNR…EEARRNMTKV (64 aa)) constitute an S5 DRBM domain.

It belongs to the universal ribosomal protein uS5 family. As to quaternary structure, part of the 30S ribosomal subunit. Contacts proteins S4 and S8.

In terms of biological role, with S4 and S12 plays an important role in translational accuracy. Functionally, located at the back of the 30S subunit body where it stabilizes the conformation of the head with respect to the body. This is Small ribosomal subunit protein uS5 from Polaromonas sp. (strain JS666 / ATCC BAA-500).